The following is a 332-amino-acid chain: Cytochrome c oxidase subunit 2 (332 aa).

The first 20 residues, 1 to 20 (MKIPGSVITLLIGVVITVVS), serve as a signal peptide directing secretion. 2 helical membrane-spanning segments follow: residues 48–68 (MMTI…YCLI) and 87–107 (VPLE…LAVY). Positions 214, 249, 253, and 257 each coordinate Cu cation.

The protein belongs to the cytochrome c oxidase subunit 2 family. The cofactor is Cu cation.

The protein resides in the cell membrane. It catalyses the reaction 4 Fe(II)-[cytochrome c] + O2 + 8 H(+)(in) = 4 Fe(III)-[cytochrome c] + 2 H2O + 4 H(+)(out). In terms of biological role, subunits I and II form the functional core of the enzyme complex. Electrons originating in cytochrome c are transferred via heme a and Cu(A) to the binuclear center formed by heme a3 and Cu(B). This Synechocystis sp. (strain ATCC 27184 / PCC 6803 / Kazusa) protein is Cytochrome c oxidase subunit 2 (ctaC).